The primary structure comprises 219 residues: Histone H1.01 (219 aa).

2 stretches are compositionally biased toward low complexity: residues 1-19 (MSET…GAKA) and 27-39 (AAGG…PAGP). Disordered regions lie at residues 1-40 (MSET…AGPS) and 94-219 (LVQT…AKKK). S2 is subject to N-acetylserine. The 74-residue stretch at 37–110 (AGPSVTELIT…GASGSFRLNK (74 aa)) folds into the H15 domain. 4 stretches are compositionally biased toward basic residues: residues 119–134 (APRK…KPAA), 142–159 (KKPK…KAKK), 167–185 (KAAK…KKAA), and 192–219 (KAVK…AKKK).

It belongs to the histone H1/H5 family.

It localises to the nucleus. The protein resides in the chromosome. In terms of biological role, histones H1 are necessary for the condensation of nucleosome chains into higher-order structures. The polypeptide is Histone H1.01 (Gallus gallus (Chicken)).